A 131-amino-acid chain; its full sequence is Small ribosomal subunit protein uS9 (131 aa).

This sequence belongs to the universal ribosomal protein uS9 family.

This chain is Small ribosomal subunit protein uS9, found in Glaesserella parasuis serovar 5 (strain SH0165) (Haemophilus parasuis).